A 750-amino-acid chain; its full sequence is MIPKTFKEVIDLGDGREISIETGKLAKQAHGSVVVQSGKCMLLCTVVSNYEQKDLPFLPLTVDYREKFAAAGRYPGGFFKREARPSDGEVLTMRLVDRVLRPLFPKDYSAETQVMIQLMSHDDEVMPEAMAGLAASAAIQLSDFPFECAISEARVGRVNGEFIINPTRAQLAESDIEMMIGASADSVMMVEGEMDEISEEDMVEAIKFAHEAIKVQIEAQHRLADAFGRKEVREYEDAPENEDLVKKVHDMAYDKVYAVAKAGSSKKERTDAFASIKEEVKASFSEEELEEYGDLVSDYYRKAEKAAVRDLTLNEGIRLDGRKTDEVRDIWCEVDYLPSVHGSSIFTRGETQALATVTLGTSRDANQIDMPSHEGEERFYLHYNFPPFCTGEARPIRGTSRREVGHGNLAQRALKGMIPEECPYTVRVVSEVLESNGSSSMATVCAGTMALMDAGVQMKKPVSGIAMGLISDGDSGKYAVLSDILGDEDHLGDMDFKVTGTADGITACQMDIKVKGLSYEILVNALKQARDGRLHILEKLTDTIAQPNADVKAYAPKMITRRIPNEFIGALIGPGGKVIQELQKETGTTIVINEDPVTEEGIIEILGTEQEGIDKVIAKIESITFKPEKGSVYEVKVIKVLDFGAVVEYMDAPGNEVLLHISELAWERTNDVNDVLKLGDVLDVKYFGLDPKTRKDKVSRKALMEKPEGYKERAPRDRDDKRGSRDNNRGRDNRGRDNRRDDRKPRENKD.

Residues Asp-489 and Asp-495 each contribute to the Mg(2+) site. A KH domain is found at 556 to 620; that stretch reads PKMITRRIPN…EGIDKVIAKI (65 aa). In terms of domain architecture, S1 motif spans 630 to 701; sequence GSVYEVKVIK…KTRKDKVSRK (72 aa). A disordered region spans residues 697-750; the sequence is KVSRKALMEKPEGYKERAPRDRDDKRGSRDNNRGRDNRGRDNRRDDRKPRENKD. Basic and acidic residues predominate over residues 702-750; it reads ALMEKPEGYKERAPRDRDDKRGSRDNNRGRDNRGRDNRRDDRKPRENKD.

Belongs to the polyribonucleotide nucleotidyltransferase family. The cofactor is Mg(2+).

It localises to the cytoplasm. The catalysed reaction is RNA(n+1) + phosphate = RNA(n) + a ribonucleoside 5'-diphosphate. In terms of biological role, involved in mRNA degradation. Catalyzes the phosphorolysis of single-stranded polyribonucleotides processively in the 3'- to 5'-direction. This is Polyribonucleotide nucleotidyltransferase from Christiangramia forsetii (strain DSM 17595 / CGMCC 1.15422 / KT0803) (Gramella forsetii).